Here is a 173-residue protein sequence, read N- to C-terminus: Translation initiation factor IF-3 (173 aa).

Belongs to the IF-3 family. Monomer.

It localises to the cytoplasm. Its function is as follows. IF-3 binds to the 30S ribosomal subunit and shifts the equilibrium between 70S ribosomes and their 50S and 30S subunits in favor of the free subunits, thus enhancing the availability of 30S subunits on which protein synthesis initiation begins. This chain is Translation initiation factor IF-3, found in Methylorubrum populi (strain ATCC BAA-705 / NCIMB 13946 / BJ001) (Methylobacterium populi).